A 201-amino-acid chain; its full sequence is MSGTSESELKNLISSLHLNNGFLGIFDCRFPGFLQKSKIQTAIINTGPREQGGIHWITLALEPISYKLFIFDPLGWKDTQLIKFYNFSLNSLIKRSALNNSDRCITVERNTQSVQCTCAGSCGLFCIFFLYCFHFYKQNVFKSWLFQKLNGSTPSLIPCEPHLLHENQTFLYDFLNAKSVYFRKNYRTFIENTKTGLIKTH.

Active-site residues include His-55, Asp-72, and Cys-122.

The protein belongs to the peptidase C5 family. As to quaternary structure, interacts with protease cofactor pVI-C; this interaction is necessary for protease activation.

The protein localises to the virion. It is found in the host nucleus. It catalyses the reaction Cleaves proteins of the adenovirus and its host cell at two consensus sites: -Yaa-Xaa-Gly-Gly-|-Xaa- and -Yaa-Xaa-Gly-Xaa-|-Gly- (in which Yaa is Met, Ile or Leu, and Xaa is any amino acid).. Requires DNA and protease cofactor for maximal activation. Inside nascent virions, becomes partially activated by binding to the viral DNA, allowing it to cleave the cofactor that binds to the protease and fully activates it. Actin, like the viral protease cofactor, seems to act as a cofactor in the cleavage of cytokeratin 18 and of actin itself. In terms of biological role, cleaves viral precursor proteins (pTP, pIIIa, pVI, pVII, pVIII, and pX) inside newly assembled particles giving rise to mature virions. Protease complexed to its cofactor slides along the viral DNA to specifically locate and cleave the viral precursors. Mature virions have a weakened organization compared to the unmature virions, thereby facilitating subsequent uncoating. Without maturation, the particle lacks infectivity and is unable to uncoat. Late in adenovirus infection, in the cytoplasm, may participate in the cytoskeleton destruction. Cleaves host cell cytoskeletal keratins K7 and K18. The chain is Protease from Ovis aries (Sheep).